Here is a 492-residue protein sequence, read N- to C-terminus: Glutamyl-tRNA(Gln) amidotransferase subunit A (492 aa).

Catalysis depends on charge relay system residues lysine 78 and serine 158. Serine 182 (acyl-ester intermediate) is an active-site residue.

This sequence belongs to the amidase family. GatA subfamily. As to quaternary structure, heterotrimer of A, B and C subunits.

The enzyme catalyses L-glutamyl-tRNA(Gln) + L-glutamine + ATP + H2O = L-glutaminyl-tRNA(Gln) + L-glutamate + ADP + phosphate + H(+). Allows the formation of correctly charged Gln-tRNA(Gln) through the transamidation of misacylated Glu-tRNA(Gln) in organisms which lack glutaminyl-tRNA synthetase. The reaction takes place in the presence of glutamine and ATP through an activated gamma-phospho-Glu-tRNA(Gln). This is Glutamyl-tRNA(Gln) amidotransferase subunit A from Rhodopseudomonas palustris (strain BisB18).